The chain runs to 306 residues: Serine/threonine-protein phosphatase PP2A-2 catalytic subunit (306 aa).

Mn(2+)-binding residues include aspartate 54, histidine 56, aspartate 82, and asparagine 114. The active-site Proton donor is the histidine 115. Histidine 164 and histidine 238 together coordinate Mn(2+). Leucine 306 carries the leucine methyl ester modification.

The protein belongs to the PPP phosphatase family. PP-2A subfamily. As to quaternary structure, PP2A consists of a common heterodimeric core enzyme, composed of a 36 kDa catalytic subunit (subunit C) and a 65 kDa constant regulatory subunit (subunit A), that associates with a variety of regulatory subunits such as subunits B (the R2/B/PR55/B55, R3/B''/PR72/PR130/PR59 and R5/B'/B56 families). Interacts with B'THETA. Interacts with HDA14. Interacts with SRK2E/OST1. Interacts with TAP46. Mn(2+) is required as a cofactor. In terms of processing, reversibly methyl esterified on Leu-306 by leucine carboxyl methyltransferase 1 (LCMT1) and pectin methylesterase 1 (PME1). Carboxyl methylation influences the affinity of the catalytic subunit for the different regulatory subunits, thereby modulating the PP2A holoenzyme's substrate specificity, enzyme activity and cellular localization. Phosphorylation of either threonine (by autophosphorylation-activated protein kinase) or tyrosine results in inactivation of the phosphatase. Auto-dephosphorylation has been suggested as a mechanism for reactivation. Expressed in root meristem, emerging lateral roots, leaf vasculature, stipules, guard cells, anthers and pollen grains.

It localises to the cytoplasm. It is found in the cytosol. The protein localises to the nucleus. Its subcellular location is the peroxisome. It carries out the reaction O-phospho-L-seryl-[protein] + H2O = L-seryl-[protein] + phosphate. The enzyme catalyses O-phospho-L-threonyl-[protein] + H2O = L-threonyl-[protein] + phosphate. Its function is as follows. Dephosphorylates and activates the actin-depolymerizing factor ADF1, which, in turn, regulates actin cytoskeleton remodeling and is involved in the blue light photoreceptor PHOT2-mediated chloroplast avoidance movements. Associates with the serine/threonine-protein phosphatase PP2A regulatory subunits A and B' to positively regulates beta-oxidation of fatty acids and protoauxins in peroxisomes by dephosphorylating peroxisomal beta-oxidation-related proteins. Acts as a negative regulator of abscisic acid (ABA) signaling. May regulate ABA-dependent gene expression. Involved in the light-dependent activation of nitrate reductase. This is Serine/threonine-protein phosphatase PP2A-2 catalytic subunit from Arabidopsis thaliana (Mouse-ear cress).